A 369-amino-acid polypeptide reads, in one-letter code: Chorismate synthase (369 aa).

NADP(+) contacts are provided by Arg48 and Arg54. FMN is bound by residues 125–127 (RSS), 238–239 (NA), Gly278, 293–297 (KPTSS), and Arg319.

It belongs to the chorismate synthase family. In terms of assembly, homotetramer. FMNH2 serves as cofactor.

It catalyses the reaction 5-O-(1-carboxyvinyl)-3-phosphoshikimate = chorismate + phosphate. It participates in metabolic intermediate biosynthesis; chorismate biosynthesis; chorismate from D-erythrose 4-phosphate and phosphoenolpyruvate: step 7/7. Catalyzes the anti-1,4-elimination of the C-3 phosphate and the C-6 proR hydrogen from 5-enolpyruvylshikimate-3-phosphate (EPSP) to yield chorismate, which is the branch point compound that serves as the starting substrate for the three terminal pathways of aromatic amino acid biosynthesis. This reaction introduces a second double bond into the aromatic ring system. The polypeptide is Chorismate synthase (Burkholderia mallei (strain ATCC 23344)).